The chain runs to 593 residues: ETS-related transcription factor Elf-2 (593 aa).

At Ser107 the chain carries Phosphoserine. The disordered stretch occupies residues 146 to 201; it reads VEVSTEESEPMDTSPIPTSPDSHEPMKKKKVGRKPKTQQSPISNGSPELGIKKKPR. The span at 171 to 181 shows a compositional bias: basic residues; sequence MKKKKVGRKPK. Thr182 carries the phosphothreonine modification. A compositionally biased stretch (polar residues) spans 182–191; the sequence is TQQSPISNGS. Phosphoserine is present on residues Ser185 and Ser191. The ETS DNA-binding region spans 208–290; the sequence is TYLWEFLLDL…EGQRLVYQFK (83 aa). Residues Ser363 and Ser372 each carry the phosphoserine modification. Thr376 is modified (phosphothreonine). A Phosphoserine modification is found at Ser430. Arg494 is subject to Omega-N-methylarginine. Thr521 is subject to Phosphothreonine. Lys536 participates in a covalent cross-link: Glycyl lysine isopeptide (Lys-Gly) (interchain with G-Cter in SUMO2).

Belongs to the ETS family. Interacts with the LIM domains of LMO2. Interacts via its N-terminal region with RUNX1. Expressed in all fetal and adult tissues examined. Among fetal tissues, highest levels of expression detected in heart, lung, liver and kidney, and lower levels in brain. Among adult tissues, highest levels of expression detected in heart, placenta, lung, skeletal muscle, spleen, thymus, testis and ovary. Moderate expression in prostate, small intestine, kidney, liver and pancreas, and weak expression in colon, brain and peripheral blood lymphocytes.

It localises to the nucleus. Its function is as follows. Isoform 1 transcriptionally activates the LYN and BLK promoters and acts synergistically with RUNX1 to transactivate the BLK promoter. Functionally, isoform 2 may function in repression of RUNX1-mediated transactivation. This Homo sapiens (Human) protein is ETS-related transcription factor Elf-2.